The sequence spans 529 residues: Probable alpha-galactosidase A (529 aa).

Residues 1-19 (MKALFAAITMAHALLQTQA) form the signal peptide. Residues Cys42 and Cys74 are joined by a disulfide bond. Asn45, Asn83, Asn89, and Asn119 each carry an N-linked (GlcNAc...) asparagine glycan. A disulfide bond links Cys122 and Cys152. Catalysis depends on Asp150, which acts as the Nucleophile. Asn199 carries N-linked (GlcNAc...) asparagine glycosylation. The Proton donor role is filled by Asp208. Asn351 carries an N-linked (GlcNAc...) asparagine glycan. The Ricin B-type lectin domain occupies 408-528 (RVDAVSTGIV…GLPSGVRVSG (121 aa)). 2 disulfide bridges follow: Cys425–Cys438 and Cys462–Cys475.

Belongs to the glycosyl hydrolase 27 family.

Its subcellular location is the secreted. The catalysed reaction is Hydrolysis of terminal, non-reducing alpha-D-galactose residues in alpha-D-galactosides, including galactose oligosaccharides, galactomannans and galactolipids.. Functionally, hydrolyzes a variety of simple alpha-D-galactoside as well as more complex molecules such as oligosaccharides and polysaccharides. This Aspergillus terreus (strain NIH 2624 / FGSC A1156) protein is Probable alpha-galactosidase A (aglA).